A 46-amino-acid chain; its full sequence is Large ribosomal subunit protein bL36 (46 aa).

The protein belongs to the bacterial ribosomal protein bL36 family.

In Escherichia coli O7:K1 (strain IAI39 / ExPEC), this protein is Large ribosomal subunit protein bL36.